The following is a 338-amino-acid chain: Fructose-1,6-bisphosphatase class 1 (338 aa).

Mg(2+) is bound by residues Glu-92, Asp-115, Leu-117, and Asp-118. Residues 118–121 (DGSS), Asn-211, Tyr-244, and Lys-274 contribute to the substrate site. A Mg(2+)-binding site is contributed by Glu-280.

The protein belongs to the FBPase class 1 family. Homotetramer. The cofactor is Mg(2+).

The protein resides in the cytoplasm. It carries out the reaction beta-D-fructose 1,6-bisphosphate + H2O = beta-D-fructose 6-phosphate + phosphate. The protein operates within carbohydrate biosynthesis; gluconeogenesis. This is Fructose-1,6-bisphosphatase class 1 from Photobacterium profundum (strain SS9).